The chain runs to 1330 residues: Major capsid protein (1330 aa).

The protein belongs to the herpesviridae major capsid protein family. Homomultimer. Makes the hexons and eleven out of twelve pentons. Interacts with triplex proteins 1/TRX1 and 2/TRX2; adjacent capsomers are linked together in groups of three by triplexes, heterotrimeric complexes composed of one molecule of TRX1 and two molecules of TRX2. Interacts with scaffold protein; this interaction allows efficient MCP transport to the host nucleus. Interacts with capsid vertex component 2/CVC2. Interacts with the small capsomere-interacting protein/SCP.

The protein localises to the virion. It localises to the host nucleus. In terms of biological role, self-assembles to form an icosahedral capsid with a T=16 symmetry, about 200 nm in diameter, and consisting of 150 hexons and 12 pentons (total of 162 capsomers). Hexons form the edges and faces of the capsid and are each composed of six MCP molecules. In contrast, one penton is found at each of the 12 vertices. Eleven of the pentons are MCP pentamers, while the last vertex is occupied by the portal complex. The capsid is surrounded by a layer of proteinaceous material designated the tegument which, in turn, is enclosed in an envelope of host cell-derived lipids containing virus-encoded glycoproteins. This Sus scrofa (Pig) protein is Major capsid protein.